Reading from the N-terminus, the 160-residue chain is Transcription elongation factor GreA (160 aa).

The stretch at 1-72 (MAEKTYPMTL…QISSLETKIR (72 aa)) forms a coiled coil.

This sequence belongs to the GreA/GreB family.

Functionally, necessary for efficient RNA polymerase transcription elongation past template-encoded arresting sites. The arresting sites in DNA have the property of trapping a certain fraction of elongating RNA polymerases that pass through, resulting in locked ternary complexes. Cleavage of the nascent transcript by cleavage factors such as GreA or GreB allows the resumption of elongation from the new 3'terminus. GreA releases sequences of 2 to 3 nucleotides. This is Transcription elongation factor GreA from Streptococcus sanguinis (strain SK36).